Here is a 161-residue protein sequence, read N- to C-terminus: Large ribosomal subunit protein eL21 (161 aa).

Belongs to the eukaryotic ribosomal protein eL21 family.

This Caenorhabditis elegans protein is Large ribosomal subunit protein eL21 (rpl-21).